The chain runs to 173 residues: Large ribosomal RNA subunit accumulation protein YceD (173 aa).

Belongs to the DUF177 domain family.

Its function is as follows. Plays a role in synthesis, processing and/or stability of 23S rRNA. The protein is Large ribosomal RNA subunit accumulation protein YceD (yceD) of Escherichia coli O157:H7.